The chain runs to 1005 residues: Defense-associated sirtuin 2 (1005 aa).

The SIR2 stretch occupies residues 1-295 (MVKVDLESKR…YSAVMDLLIE (295 aa)). The tract at residues 56–111 (YPQWWRLVDKYHEELYGSPKKGNYSSDEYLRIPQIFYNVKGEMAFDGILKDFFQVD) is inter-dimer interaction. Residues Tyr-134, Asp-135, and His-171 contribute to the active site. Positions 296–548 (SQENKFITKD…YKILEFLSDN (253 aa)) are MID. The segment at 549-1005 (QFLYDDTVKL…YLEILMNYFI (457 aa)) is CTD.

As to quaternary structure, homotetramer (dimer of dimers). Homodimer. The SIR2 domains are arranged in a central core, adopting a head-to-head arrangement, while the CTDs are positioned at the periphery of the complex. Tetramerization is necessary for the activation of NADase activity. The NADase enzymatic activity of this homotetrameric form is autoinhibited. The activated form of DSR2 (after binding to the phage tube protein) exists as tetramers and dimers, with the tetramers exhibiting more NADase activity. Each tetramer binds 4 NAD(+) molecules. (Microbial infection) Interacts (via C-terminus) with phage SPR tail tube monomer protein (via N-terminus) in a 4:4 DSR2-Tube assembly; this interaction induces a conformation change of the tube protein and activates the NADase activity of DSR2. In terms of assembly, (Microbial infection) Interacts (via C-terminus) with phage SPbeta DSAD1 in a 4:2 ratio; this interaction prevents activation of the NADase defense activity of DSR2.

It carries out the reaction NAD(+) + H2O = ADP-D-ribose + nicotinamide + H(+). With respect to regulation, (Microbial infection) NADase activity is activated through the binding of SPR phage tail tube monomer protein. NADase activity is inhibited through the binding to the phage SPbeta DSR anti-defense 1 (DSAD1). Functionally, anti-phage defense protein that is activated through the binding to the phage tail tube protein monomer and which hydrolyzes NAD+ upon activation (NADase activity). The resulting depletion of NAD(+) leads to an abortive infection. The sequence is that of Defense-associated sirtuin 2 from Bacillus subtilis.